Here is a 217-residue protein sequence, read N- to C-terminus: Flagellar L-ring protein 1 (217 aa).

The first 16 residues, 1–16 (MTLARLAPLAALLLAA), serve as a signal peptide directing secretion. Cys17 carries the N-palmitoyl cysteine lipid modification. Cys17 is lipidated: S-diacylglycerol cysteine.

This sequence belongs to the FlgH family. The basal body constitutes a major portion of the flagellar organelle and consists of four rings (L,P,S, and M) mounted on a central rod.

It localises to the cell outer membrane. It is found in the bacterial flagellum basal body. Functionally, assembles around the rod to form the L-ring and probably protects the motor/basal body from shearing forces during rotation. The sequence is that of Flagellar L-ring protein 1 from Chromobacterium violaceum (strain ATCC 12472 / DSM 30191 / JCM 1249 / CCUG 213 / NBRC 12614 / NCIMB 9131 / NCTC 9757 / MK).